The primary structure comprises 427 residues: NADH-quinone oxidoreductase subunit 14 (427 aa).

14 helical membrane-spanning segments follow: residues 1 to 21, 30 to 50, 57 to 77, 79 to 99, 104 to 124, 137 to 157, 172 to 192, 204 to 224, 230 to 250, 257 to 277, 280 to 300, 322 to 342, 360 to 380, and 400 to 420; these read MTLAILAVFSVALTLLGFVLP, LLGLALALASLLLTWGKPFAF, GVSQVFTLLALLGALWTVGLV, SGRFEFYLLVLYAALGMHLLA, LLLMLVALEALSLPLYALATW, FLLGALAAAFFLYGAALFYGA, YALALGLLLVGLGFKAALAPF, PTPVVLFMATSVKAAAFAALL, PEALALLVALSVVVGNLAALA, LLAYSSIAHAGYMALALYTGN, ALGFYLLTYVLATGLAFAVLS, LGLAFLVAMLSLLGLPPLAGF, VLVLALVTSAVSAYYYLGLGL, and AAVVAAGVLLLALGLLPGLVL.

It belongs to the complex I subunit 2 family. As to quaternary structure, NDH-1 is composed of 15 different subunits, Nqo1 to Nqo15. The complex has a L-shaped structure, with the hydrophobic arm (subunits Nqo7, Nqo8 and Nqo10 to Nqo14) embedded in the membrane and the hydrophilic peripheral arm (subunits Nqo1 to Nqo6, Nqo9 and Nqo15) protruding into the bacterial cytoplasm. The hydrophilic domain contains all the redox centers.

The protein localises to the cell inner membrane. The enzyme catalyses a quinone + NADH + 5 H(+)(in) = a quinol + NAD(+) + 4 H(+)(out). In terms of biological role, NDH-1 shuttles electrons from NADH, via FMN and iron-sulfur (Fe-S) centers, to quinones in the respiratory chain. The immediate electron acceptor for the enzyme in this species is menaquinone. Couples the redox reaction to proton translocation (for every two electrons transferred, four hydrogen ions are translocated across the cytoplasmic membrane), and thus conserves the redox energy in a proton gradient required for the synthesis of ATP. The sequence is that of NADH-quinone oxidoreductase subunit 14 (nqo14) from Thermus thermophilus (strain ATCC 27634 / DSM 579 / HB8).